The primary structure comprises 259 residues: Short chain dehydrogenase ausX (259 aa).

Residues Ile13, Asp59, Arg121, Tyr153, Lys157, and Val186 each contribute to the NADP(+) site. Tyr153 functions as the Proton acceptor in the catalytic mechanism. Residue Tyr153 is the Proton donor of the active site. The active-site Lowers pKa of active site Tyr is Lys157.

The protein belongs to the short-chain dehydrogenases/reductases (SDR) family.

It functions in the pathway secondary metabolite biosynthesis; terpenoid biosynthesis. Functionally, short chain dehydrogenase; part of the gene cluster A that mediates the biosynthesis of the fungal meroterpenoid acetoxydehydroaustin. The first step of the pathway is the synthesis of 3,5-dimethylorsellinic acid by the polyketide synthase ausA. 3,5-dimethylorsellinic acid is then prenylated by the polyprenyl transferase ausN. Further epoxidation by the FAD-dependent monooxygenase ausM and cyclization by the probable terpene cyclase ausL lead to the formation of protoaustinoid A. Protoaustinoid A is then oxidized to spiro-lactone preaustinoid A3 by the combined action of the FAD-binding monooxygenases ausB and ausC, and the dioxygenase ausE. Acid-catalyzed keto-rearrangement and ring contraction of the tetraketide portion of preaustinoid A3 by ausJ lead to the formation of preaustinoid A4. The aldo-keto reductase ausK, with the help of ausH, is involved in the next step by transforming preaustinoid A4 into isoaustinone which is in turn hydroxylated by the P450 monooxygenase ausI to form austinolide. The cytochrome P450 monooxygenase ausG then modifies austinolide to austinol. Austinol is further acetylated to austin by the O-acetyltransferase ausP, which spontaneously changes to dehydroaustin. The cytochrome P450 monooxygenase then converts dehydroaustin is into 7-dehydrodehydroaustin. The hydroxylation catalyzed by ausR permits the second O-acetyltransferase ausQ to add an additional acetyl group to the molecule, leading to the formation of acetoxydehydroaustin. Due to genetic rearrangements of the clusters and the subsequent loss of some enzymes, the end product of the Penicillium brasilianum austinoid biosynthesis clusters is acetoxydehydroaustin. The chain is Short chain dehydrogenase ausX from Penicillium brasilianum.